The chain runs to 270 residues: 4-hydroxy-tetrahydrodipicolinate reductase (270 aa).

NAD(+)-binding positions include 9-14 (GAGGRM) and E35. R36 lines the NADP(+) pocket. NAD(+) is bound by residues 99–101 (GTT) and 123–126 (ASNF). The active-site Proton donor/acceptor is H156. H157 contacts (S)-2,3,4,5-tetrahydrodipicolinate. The active-site Proton donor is K160. 166–167 (GT) is a binding site for (S)-2,3,4,5-tetrahydrodipicolinate.

It belongs to the DapB family.

It is found in the cytoplasm. It catalyses the reaction (S)-2,3,4,5-tetrahydrodipicolinate + NAD(+) + H2O = (2S,4S)-4-hydroxy-2,3,4,5-tetrahydrodipicolinate + NADH + H(+). The catalysed reaction is (S)-2,3,4,5-tetrahydrodipicolinate + NADP(+) + H2O = (2S,4S)-4-hydroxy-2,3,4,5-tetrahydrodipicolinate + NADPH + H(+). The protein operates within amino-acid biosynthesis; L-lysine biosynthesis via DAP pathway; (S)-tetrahydrodipicolinate from L-aspartate: step 4/4. Its function is as follows. Catalyzes the conversion of 4-hydroxy-tetrahydrodipicolinate (HTPA) to tetrahydrodipicolinate. The protein is 4-hydroxy-tetrahydrodipicolinate reductase of Pasteurella multocida (strain Pm70).